Reading from the N-terminus, the 312-residue chain is Olfactory receptor 10D3 (312 aa).

The Extracellular portion of the chain corresponds to 1 to 26 (MEIKNCSVVTEFILLGIPHTEGFETL). N-linked (GlcNAc...) asparagine glycosylation occurs at N5. Residues 27-47 (LFVLFLPFYACTLVGNVSILV) form a helical membrane-spanning segment. Topologically, residues 48-57 (AVISSTRLHT) are cytoplasmic. A helical membrane pass occupies residues 58 to 78 (PMYFFLGNLSVFDMGFSSVTC). Residues 79-97 (PKMLFYLMGLSRLISYQDC) lie on the Extracellular side of the membrane. The cysteines at positions 97 and 179 are disulfide-linked. Residues 98–118 (VSQLFFFHFLGSIECFLYTVM) traverse the membrane as a helical segment. Topologically, residues 119-139 (AYDRFAAICHPLRYSVIMNSK) are cytoplasmic. A helical transmembrane segment spans residues 140 to 160 (ICVALAVGTWLLGCFHSSVLT). Over 161-197 (SLTFTLPYCGPNEVDHFFCDIPAILPLASADTSLAQR) the chain is Extracellular. A helical transmembrane segment spans residues 198-218 (VSFTNVGLVSLVCFLLILLSY). At 219 to 239 (TRITISILSIQSTEGRQRAFS) the chain is on the cytoplasmic side. A helical transmembrane segment spans residues 240-260 (TCSAHLIAILCAYGPIITIYL). The Extracellular portion of the chain corresponds to 261 to 266 (QPTPNP). A helical transmembrane segment spans residues 267–287 (MLGTVVQILMNLVGPMLNPLI). At 288–312 (YTLRNKEVKIALKKILHGKGSVSEG) the chain is on the cytoplasmic side.

It belongs to the G-protein coupled receptor 1 family.

It localises to the cell membrane. In terms of biological role, potential odorant receptor. The protein is Olfactory receptor 10D3 of Mus musculus (Mouse).